We begin with the raw amino-acid sequence, 580 residues long: Acyl--CoA ligase GME11374 (580 aa).

This sequence belongs to the ATP-dependent AMP-binding enzyme family.

The protein operates within secondary metabolite biosynthesis. Acyl--CoA ligase; part of the gene cluster that mediates the biosynthesis of dibenzodioxocinones such as pestalotiollide B, a novel class of inhibitors against cholesterol ester transfer protein (CEPT). The biosynthesis initiates from condensation of acetate and malonate units catalyzed by the non-reducing PKS pks8/GME11356. Pks8/GME11356 lacks a thioesterase (TE) domain, which is important to the cyclizing of the third ring of atrochrysone carboxylic acid, and the esterase GME11355 might play the role of TE and catalyzes the cyclization reaction of the C ring. The lactamase-like protein GME11357 (or other beta-lactamases in Pestalotiopsis microspora) probably hydrolyzes the thioester bond between the ACP of pks8/GME11356 and the intermediate to release atrochrysone carboxylic acid, which is spontaneously dehydrates to form endocrocin anthrone. Endocrocin anthrone is further converted to emodin via the endocrocin intermediate. Emodin is then oxidized by several enzymes such as the Baeyer-Villiger oxidase GME11358, the oxidoreductase GME11367, the short chain dehydrogenase/reductase GME11373, as well as by other oxidoreductases from the cluster, to modify the A and C rings and open the B ring, and finally yield monodictyphenone. The prenyltransferase GME11375 may catalyze the addition reaction between the C5 side chains and the carbon bone of dibenzodioxocinones. The remaining biochemical reactions to the final product dibenzodioxocinones should be methylation catalyzed by methyltransferase GME11366 and reduction and lactonization reaction catalyzed by a series of oxidordeuctases. The protein is Acyl--CoA ligase GME11374 of Pestalotiopsis microspora.